The primary structure comprises 360 residues: Uroporphyrinogen decarboxylase (360 aa).

Substrate is bound by residues 27–31 (RQSGR), phenylalanine 46, aspartate 77, tyrosine 154, threonine 209, and histidine 327.

Belongs to the uroporphyrinogen decarboxylase family. As to quaternary structure, homodimer.

It localises to the cytoplasm. It catalyses the reaction uroporphyrinogen III + 4 H(+) = coproporphyrinogen III + 4 CO2. It participates in porphyrin-containing compound metabolism; protoporphyrin-IX biosynthesis; coproporphyrinogen-III from 5-aminolevulinate: step 4/4. Its function is as follows. Catalyzes the decarboxylation of four acetate groups of uroporphyrinogen-III to yield coproporphyrinogen-III. This chain is Uroporphyrinogen decarboxylase, found in Wigglesworthia glossinidia brevipalpis.